Consider the following 176-residue polypeptide: Mitochondrial inner membrane protein Mpv17 (176 aa).

4 helical membrane passes run 18-38 (VQVL…QQLV), 53-73 (TMVS…YKVL), 94-114 (GGFA…LNGM), and 131-151 (LITN…LVPL).

It belongs to the peroxisomal membrane protein PXMP2/4 family. As to expression, high levels in heart, kidney, and brain, intermediate levels in testis, and low levels in liver and spleen.

The protein localises to the mitochondrion inner membrane. Functionally, non-selective channel that modulates the membrane potential under normal conditions and oxidative stress, and is involved in mitochondrial homeostasis. Involved in mitochondrial deoxynucleoside triphosphates (dNTP) pool homeostasis and mitochondrial DNA (mtDNA) maintenance. May be involved in the regulation of reactive oxygen species metabolism and the control of oxidative phosphorylation. The protein is Mitochondrial inner membrane protein Mpv17 of Mus musculus (Mouse).